The primary structure comprises 187 residues: Casparian strip membrane protein 1 (187 aa).

Basic and acidic residues predominate over residues 1-10; it reads MKGSSEHGET. A disordered region spans residues 1-20; that stretch reads MKGSSEHGETSKQAPLGSSR. Residues 1-27 are Cytoplasmic-facing; that stretch reads MKGSSEHGETSKQAPLGSSRGVSKGVS. The chain crosses the membrane as a helical span at residues 28 to 48; that stretch reads VLDLILRFIAIIGTLASAIAM. Residues 49 to 75 are Extracellular-facing; that stretch reads GTTNETLPFFTQFIRFKAQYSDLPTLT. Asn52 carries N-linked (GlcNAc...) asparagine glycosylation. Residues 76–96 form a helical membrane-spanning segment; it reads FFVVANSIVCAYLTLSLPLSI. The Cytoplasmic segment spans residues 97–115; the sequence is VHIIRSRAKYSRLLLVVLD. Residues 116–136 form a helical membrane-spanning segment; that stretch reads AAMLALVTPGASAAAAIVYLA. Residues 137–162 are Extracellular-facing; that stretch reads HKGNVRANWLAICQQFDSFCERISGC. The chain crosses the membrane as a helical span at residues 163-183; that stretch reads LIGSFGAMVMLVLLLLLSAIA. The Cytoplasmic segment spans residues 184–187; that stretch reads LARR.

This sequence belongs to the Casparian strip membrane proteins (CASP) family. Homodimer and heterodimers.

Its subcellular location is the cell membrane. Functionally, regulates membrane-cell wall junctions and localized cell wall deposition. Required for establishment of the Casparian strip membrane domain (CSD) and the subsequent formation of Casparian strips, a cell wall modification of the root endodermis that determines an apoplastic barrier between the intraorganismal apoplasm and the extraorganismal apoplasm and prevents lateral diffusion. The chain is Casparian strip membrane protein 1 from Zea mays (Maize).